The primary structure comprises 398 residues: Acetate kinase (398 aa).

A Mg(2+)-binding site is contributed by asparagine 7. Residue lysine 14 participates in ATP binding. Arginine 91 is a binding site for substrate. The Proton donor/acceptor role is filled by aspartate 148. ATP contacts are provided by residues 208–212 (HLGNG), 283–285 (DFR), and 331–335 (GIGEH). Glutamate 386 is a binding site for Mg(2+).

It belongs to the acetokinase family. In terms of assembly, homodimer. It depends on Mg(2+) as a cofactor. The cofactor is Mn(2+).

The protein localises to the cytoplasm. The catalysed reaction is acetate + ATP = acetyl phosphate + ADP. It participates in metabolic intermediate biosynthesis; acetyl-CoA biosynthesis; acetyl-CoA from acetate: step 1/2. Catalyzes the formation of acetyl phosphate from acetate and ATP. Can also catalyze the reverse reaction. This chain is Acetate kinase, found in Clostridium botulinum (strain Alaska E43 / Type E3).